The sequence spans 436 residues: MDVVDSLLMNGSNITPPCELGLENETLFCLDQPQPSKEWQSAVQILLYSFIFLLSVLGNTLVITVLIRNKRMRTVTNIFLLSLAVSDLMLCLFCMPFNLIPNLLKDFIFGSAVCKTTTYFMGTSVSVSTFNLVAISLERYGAICRPLQSRVWQTKSHALKVIAATWCLSFTIMTPYPIYSNLVPFTKNNNQTANMCRFLLPSDAMQQSWQTFLLLILFLIPGVVMVVAYGLISLELYQGIKFDASQKKSAKEKRLSSGGGGGGGSSSSRYEDSDGCYLQKSRPPRKLELQQLSTSSSGGRINRIRSSGSAANLIAKKRVIRMLIVIVVLFFLCWMPIFSANAWRAYDTVSAEKHLSGTPISFILLLSYTSSCVNPIIYCFMNKRFRLGFMATFPCCPNPGPTGVRGEVGEEEDGRTIRASLSRYSYSHMSTSAPPH.

Topologically, residues 1–41 (MDVVDSLLMNGSNITPPCELGLENETLFCLDQPQPSKEWQS) are extracellular. N10 and N24 each carry an N-linked (GlcNAc...) asparagine glycan. Cysteines 18 and 29 form a disulfide. Residues 42–67 (AVQILLYSFIFLLSVLGNTLVITVLI) traverse the membrane as a helical segment. At 68–77 (RNKRMRTVTN) the chain is on the cytoplasmic side. Residues 78–104 (IFLLSLAVSDLMLCLFCMPFNLIPNLL) traverse the membrane as a helical segment. Over 105–115 (KDFIFGSAVCK) the chain is Extracellular. Residues C114 and C196 are joined by a disulfide bond. Residues 116 to 137 (TTTYFMGTSVSVSTFNLVAISL) traverse the membrane as a helical segment. Residues 138 to 157 (ERYGAICRPLQSRVWQTKSH) lie on the Cytoplasmic side of the membrane. The chain crosses the membrane as a helical span at residues 158 to 178 (ALKVIAATWCLSFTIMTPYPI). At 179–210 (YSNLVPFTKNNNQTANMCRFLLPSDAMQQSWQ) the chain is on the extracellular side. N-linked (GlcNAc...) asparagine glycosylation occurs at N190. The helical transmembrane segment at 211–234 (TFLLLILFLIPGVVMVVAYGLISL) threads the bilayer. Topologically, residues 235–321 (ELYQGIKFDA…NLIAKKRVIR (87 aa)) are cytoplasmic. The tract at residues 252–280 (EKRLSSGGGGGGGSSSSRYEDSDGCYLQK) is disordered. A helical transmembrane segment spans residues 322 to 342 (MLIVIVVLFFLCWMPIFSANA). Over 343–357 (WRAYDTVSAEKHLSG) the chain is Extracellular. The chain crosses the membrane as a helical span at residues 358–381 (TPISFILLLSYTSSCVNPIIYCFM). The Cytoplasmic segment spans residues 382–436 (NKRFRLGFMATFPCCPNPGPTGVRGEVGEEEDGRTIRASLSRYSYSHMSTSAPPH). C395 is lipidated: S-palmitoyl cysteine.

It belongs to the G-protein coupled receptor 1 family.

The protein localises to the cell membrane. Functionally, receptor for cholecystokinin. Mediates pancreatic growth and enzyme secretion, smooth muscle contraction of the gall bladder and stomach. Has a 1000-fold higher affinity for CCK rather than for gastrin. It modulates feeding and dopamine-induced behavior in the central and peripheral nervous system. This receptor mediates its action by association with G proteins that activate a phosphatidylinositol-calcium second messenger system. The protein is Cholecystokinin receptor type A (Cckar) of Mus musculus (Mouse).